A 498-amino-acid polypeptide reads, in one-letter code: Tryptophan decarboxylase TDC2 (498 aa).

Lysine 316 carries the N6-(pyridoxal phosphate)lysine modification.

It belongs to the group II decarboxylase family. It depends on pyridoxal 5'-phosphate as a cofactor.

It catalyses the reaction L-tryptophan + H(+) = tryptamine + CO2. Involved in the biosynthesis of tryptamine. Supplies tryptamine for the indole moiety of camptothecin (CPT), an anti-cancer monoterpene alkaloid. Represents a key step in monoterpene indole alkaloid biosynthesis. Is specific for tryptophan, and inactive against tyrosine, phenylalanine and 3,4-dihydroxyphenylalanine (dopa). The protein is Tryptophan decarboxylase TDC2 of Camptotheca acuminata (Happy tree).